The following is a 493-amino-acid chain: Acetylcholine receptor subunit beta (493 aa).

The N-terminal stretch at 1 to 24 (MENVRRMALGLVVMMALALSGVGA) is a signal peptide. At 25–240 (SVMEDTLLSV…VTFYLIIQRK (216 aa)) the chain is on the extracellular side. The cysteines at positions 152 and 166 are disulfide-linked. Residue Asn165 is glycosylated (N-linked (GlcNAc...) asparagine). Helical transmembrane passes span 241–265 (PLFY…VFYL), 273–291 (MSLS…LLLA), and 307–328 (YLMF…VLNL). Residues 329 to 461 (HHRSPNTHTM…WQYVAMVADR (133 aa)) lie on the Cytoplasmic side of the membrane. Phosphotyrosine; by Tyr-kinases is present on Tyr379. A helical membrane pass occupies residues 462–480 (LFLYVFFVICSIGTFSIFL).

It belongs to the ligand-gated ion channel (TC 1.A.9) family. Acetylcholine receptor (TC 1.A.9.1) subfamily. Beta-1/CHRNB1 sub-subfamily. In terms of assembly, pentamer of two alpha chains, and one each of the beta, delta, and gamma chains.

The protein localises to the postsynaptic cell membrane. It localises to the cell membrane. The catalysed reaction is K(+)(in) = K(+)(out). The enzyme catalyses Na(+)(in) = Na(+)(out). Functionally, after binding acetylcholine, the AChR responds by an extensive change in conformation that affects all subunits and leads to opening of an ion-conducting channel across the plasma membrane. This is Acetylcholine receptor subunit beta (CHRNB1) from Tetronarce californica (Pacific electric ray).